Consider the following 458-residue polypeptide: tRNA modification GTPase MnmE (458 aa).

(6S)-5-formyl-5,6,7,8-tetrahydrofolate contacts are provided by R26, E88, and R127. The region spanning 224-378 (GLSTAIIGRP…IEDRINQLFF (155 aa)) is the TrmE-type G domain. N234 is a binding site for K(+). GTP is bound by residues 234–239 (NVGKSS), 253–259 (TDIAGTT), and 278–281 (DTAG). Position 238 (S238) interacts with Mg(2+). T253, I255, and T258 together coordinate K(+). A Mg(2+)-binding site is contributed by T259. K458 provides a ligand contact to (6S)-5-formyl-5,6,7,8-tetrahydrofolate.

Belongs to the TRAFAC class TrmE-Era-EngA-EngB-Septin-like GTPase superfamily. TrmE GTPase family. Homodimer. Heterotetramer of two MnmE and two MnmG subunits. Requires K(+) as cofactor.

It is found in the cytoplasm. In terms of biological role, exhibits a very high intrinsic GTPase hydrolysis rate. Involved in the addition of a carboxymethylaminomethyl (cmnm) group at the wobble position (U34) of certain tRNAs, forming tRNA-cmnm(5)s(2)U34. The polypeptide is tRNA modification GTPase MnmE (Streptococcus pyogenes serotype M5 (strain Manfredo)).